Reading from the N-terminus, the 1955-residue chain is 227 kDa spindle- and centromere-associated protein (1955 aa).

4 coiled-coil regions span residues 82 to 129 (KKRI…NDDV), 152 to 317 (EWAS…ELES), 385 to 1747 (VRNI…LIAL), and 1770 to 1813 (ERIV…ERFI). Disordered stretches follow at residues 1865 to 1896 (PTEQ…SYTY) and 1912 to 1955 (MTSS…TFSE). A compositionally biased stretch (polar residues) spans 1878–1896 (RTSSTIKSSEGTTRESYTY). Residues 1938-1948 (RKSRPATRKQQ) are compositionally biased toward basic residues.

It localises to the cytoplasm. Its subcellular location is the cytoskeleton. It is found in the microtubule organizing center. The protein localises to the centrosome. The protein resides in the chromosome. It localises to the centromere. Its subcellular location is the kinetochore. It is found in the spindle. In terms of biological role, may play a role in the organization of the spindle apparatus and its interaction with the centromeres. This is 227 kDa spindle- and centromere-associated protein (PUMA1) from Parascaris univalens (Nematode worm).